The primary structure comprises 403 residues: Phosphopentomutase (403 aa).

Residues D13, D298, H303, D339, H340, and H351 each contribute to the Mn(2+) site.

The protein belongs to the phosphopentomutase family. Mn(2+) serves as cofactor.

The protein localises to the cytoplasm. It carries out the reaction 2-deoxy-alpha-D-ribose 1-phosphate = 2-deoxy-D-ribose 5-phosphate. The catalysed reaction is alpha-D-ribose 1-phosphate = D-ribose 5-phosphate. Its pathway is carbohydrate degradation; 2-deoxy-D-ribose 1-phosphate degradation; D-glyceraldehyde 3-phosphate and acetaldehyde from 2-deoxy-alpha-D-ribose 1-phosphate: step 1/2. Its function is as follows. Isomerase that catalyzes the conversion of deoxy-ribose 1-phosphate (dRib-1-P) and ribose 1-phosphate (Rib-1-P) to deoxy-ribose 5-phosphate (dRib-5-P) and ribose 5-phosphate (Rib-5-P), respectively. The polypeptide is Phosphopentomutase (Streptococcus equi subsp. zooepidemicus (strain H70)).